Here is a 478-residue protein sequence, read N- to C-terminus: Puromycin-sensitive aminopeptidase-like protein (478 aa).

Residues glutamate 180 and 316–320 (GAMEN) contribute to the substrate site. Histidine 352 contacts Zn(2+). Glutamate 353 serves as the catalytic Proton acceptor. 2 residues coordinate Zn(2+): histidine 356 and glutamate 375.

It belongs to the peptidase M1 family. Requires Zn(2+) as cofactor.

Functionally, aminopeptidase with broad substrate specificity to several peptides. This Homo sapiens (Human) protein is Puromycin-sensitive aminopeptidase-like protein (NPEPPSL1).